We begin with the raw amino-acid sequence, 174 residues long: 3-hydroxydecanoyl-[acyl-carrier-protein] dehydratase (174 aa).

Histidine 71 is a catalytic residue.

This sequence belongs to the thioester dehydratase family. FabA subfamily. Homodimer.

The protein localises to the cytoplasm. The enzyme catalyses a (3R)-hydroxyacyl-[ACP] = a (2E)-enoyl-[ACP] + H2O. It carries out the reaction (3R)-hydroxydecanoyl-[ACP] = (2E)-decenoyl-[ACP] + H2O. It catalyses the reaction (2E)-decenoyl-[ACP] = (3Z)-decenoyl-[ACP]. Its pathway is lipid metabolism; fatty acid biosynthesis. In terms of biological role, necessary for the introduction of cis unsaturation into fatty acids. Catalyzes the dehydration of (3R)-3-hydroxydecanoyl-ACP to E-(2)-decenoyl-ACP and then its isomerization to Z-(3)-decenoyl-ACP. Can catalyze the dehydratase reaction for beta-hydroxyacyl-ACPs with saturated chain lengths up to 16:0, being most active on intermediate chain length. The polypeptide is 3-hydroxydecanoyl-[acyl-carrier-protein] dehydratase (Nitrobacter winogradskyi (strain ATCC 25391 / DSM 10237 / CIP 104748 / NCIMB 11846 / Nb-255)).